Reading from the N-terminus, the 332-residue chain is Phospholipase A2 inhibitor beta (332 aa).

An N-terminal signal peptide occupies residues 1–23; that stretch reads MKSSVPSLLFVSLVMSLNSYTQQ. N-linked (GlcNAc...) asparagine glycosylation occurs at asparagine 35. 8 LRR repeats span residues 78 to 101, 103 to 125, 127 to 149, 150 to 173, 175 to 197, 198 to 221, 223 to 245, and 247 to 269; these read LPNL…LFRN, PELH…IFTS, TSLT…WFET, LKEL…CFDK, EKLT…MFSG, LDNL…SFHG, PKLS…VFQP, and NHXV…VAIP. An N-linked (GlcNAc...) asparagine glycan is attached at asparagine 232. Asparagine 272 is a glycosylation site (N-linked (GlcNAc...) asparagine). The LRRCT domain occupies 280–331; that stretch reads NPWACNCRMDNLLTWVKEHKIDLYSKQEIVCAFPKSFKGEEATSLHRSQICP.

The protein belongs to the beta-type phospholipase A2 inhibitor family. Homotrimer.

The protein resides in the secreted. Functionally, inhibits the enzymatic activity of the basic phospholipase A2 (PLA2). The protein is Phospholipase A2 inhibitor beta of Elaphe climacophora (Japanese rat snake).